A 362-amino-acid polypeptide reads, in one-letter code: D-alanine--D-alanine ligase (362 aa).

The region spanning 134 to 345 is the ATP-grasp domain; that stretch reads KILAQRAGVP…YPDLITRLIR (212 aa). 170-225 is a binding site for ATP; it reads GQLGTSNLFVKPSNQGSSVGITHVTDDSNYAEALAEAFKYDDKVLVEEGIVGTEVE. Aspartate 298, glutamate 312, and asparagine 314 together coordinate Mg(2+).

This sequence belongs to the D-alanine--D-alanine ligase family. It depends on Mg(2+) as a cofactor. Mn(2+) is required as a cofactor.

Its subcellular location is the cytoplasm. It carries out the reaction 2 D-alanine + ATP = D-alanyl-D-alanine + ADP + phosphate + H(+). It functions in the pathway cell wall biogenesis; peptidoglycan biosynthesis. Functionally, cell wall formation. This chain is D-alanine--D-alanine ligase, found in Lactobacillus delbrueckii subsp. bulgaricus (strain ATCC 11842 / DSM 20081 / BCRC 10696 / JCM 1002 / NBRC 13953 / NCIMB 11778 / NCTC 12712 / WDCM 00102 / Lb 14).